Here is a 207-residue protein sequence, read N- to C-terminus: GTP cyclohydrolase 1 (207 aa).

Positions 88, 91, and 162 each coordinate Zn(2+).

This sequence belongs to the GTP cyclohydrolase I family. As to quaternary structure, toroid-shaped homodecamer, composed of two pentamers of five dimers.

The catalysed reaction is GTP + H2O = 7,8-dihydroneopterin 3'-triphosphate + formate + H(+). Its pathway is cofactor biosynthesis; 7,8-dihydroneopterin triphosphate biosynthesis; 7,8-dihydroneopterin triphosphate from GTP: step 1/1. This chain is GTP cyclohydrolase 1, found in Sulfurisphaera tokodaii (strain DSM 16993 / JCM 10545 / NBRC 100140 / 7) (Sulfolobus tokodaii).